The chain runs to 321 residues: uncharacterized protein (321 aa).

The tract at residues 157–220 (TLEQPIEEDF…EGAEEDSHEH (64 aa)) is disordered. Residues 161–214 (PIEEDFDEQDENDQNERDEDDAEEQEEDEVEEEEEEQQEEEEGENDEELTEGAE) show a composition bias toward acidic residues. The stretch at 167–212 (DEQDENDQNERDEDDAEEQEEDEVEEEEEEQQEEEEGENDEELTEG) forms a coiled coil.

This is an uncharacterized protein from Dictyostelium discoideum (Social amoeba).